Here is a 793-residue protein sequence, read N- to C-terminus: ClpA homolog protein (793 aa).

The segment at 1 to 24 (MRPRSNAGSSPPDPEEQEHAQVPS) is disordered. The Clp R domain maps to 22-168 (VPSFSSTLEQ…NFIAHGVAKD (147 aa)). Repeat regions lie at residues 25 to 88 (FSST…IDDD) and 103 to 168 (PTAA…VAKD). The tract at residues 169–194 (PSYGESRPVQGADEPQETPKAEAGEA) is disordered. The span at 185 to 194 (ETPKAEAGEA) shows a compositional bias: basic and acidic residues. The tract at residues 199–447 (LSKYCVDLNI…AQHLVSDSKR (249 aa)) is i. Residues 244 to 251 (GDPGVGKT) and 525 to 532 (GPTGVGKT) contribute to the ATP site. Positions 451-639 (LGTKEIEAVV…ILIMTSNVGA (189 aa)) are II.

It belongs to the ClpA/ClpB family.

This Fuscovulum blasticum (Rhodobacter blasticus) protein is ClpA homolog protein.